Consider the following 408-residue polypeptide: MQEIYLGVGMFTIIVLVLVAIIMFAKSKLVPQGDVEILINDDEDKKIVTQPGTKLLGALANAGIFVSSACGGGGSCGQCRVTVKEGGGDILPTELDHITKREAREGCRLSCQVNVKQDMEIELPEEVFGIRKWDCTVKSNDNVATFIKEFIVQLPEGEEVPFRAGGFIQIEAPPHHVKYKDFDISEEYHGDWDRFGFFDVESKVDEEVVRAYSMANYPEEKGIIMLNVRIATPPPNDLSLPAGKMSSYIFSLKPGDKVTISGPFGEFFAKDTDAEMVFIGGGAGMAPMRSHLFDQMRRIKTDRKVSFWYGARSKKEMFYVEDFDMLAEENENFDWHVALSDPQPEDNWEGDTGFIHNVLYERYLKDHDAPEDCEFYMCGPPVMNAAVINLLKDLGVEDENIMLDDFGG.

The chain crosses the membrane as a helical span at residues 4–24 (IYLGVGMFTIIVLVLVAIIMF). One can recognise a 2Fe-2S ferredoxin-type domain in the interval 33–127 (GDVEILINDD…DMEIELPEEV (95 aa)). [2Fe-2S] cluster-binding residues include cysteine 70, cysteine 76, cysteine 79, and cysteine 111. An FAD-binding FR-type domain is found at 130–270 (IRKWDCTVKS…SGPFGEFFAK (141 aa)).

Belongs to the NqrF family. In terms of assembly, composed of six subunits; NqrA, NqrB, NqrC, NqrD, NqrE and NqrF. The cofactor is [2Fe-2S] cluster. It depends on FAD as a cofactor.

The protein localises to the cell inner membrane. It catalyses the reaction a ubiquinone + n Na(+)(in) + NADH + H(+) = a ubiquinol + n Na(+)(out) + NAD(+). In terms of biological role, NQR complex catalyzes the reduction of ubiquinone-1 to ubiquinol by two successive reactions, coupled with the transport of Na(+) ions from the cytoplasm to the periplasm. The first step is catalyzed by NqrF, which accepts electrons from NADH and reduces ubiquinone-1 to ubisemiquinone by a one-electron transfer pathway. This Idiomarina loihiensis (strain ATCC BAA-735 / DSM 15497 / L2-TR) protein is Na(+)-translocating NADH-quinone reductase subunit F.